A 126-amino-acid polypeptide reads, in one-letter code: Large ribosomal subunit protein bL12 (126 aa).

Belongs to the bacterial ribosomal protein bL12 family. Homodimer. Part of the ribosomal stalk of the 50S ribosomal subunit. Forms a multimeric L10(L12)X complex, where L10 forms an elongated spine to which 2 to 4 L12 dimers bind in a sequential fashion. Binds GTP-bound translation factors.

Functionally, forms part of the ribosomal stalk which helps the ribosome interact with GTP-bound translation factors. Is thus essential for accurate translation. The polypeptide is Large ribosomal subunit protein bL12 (Chlorobaculum parvum (strain DSM 263 / NCIMB 8327) (Chlorobium vibrioforme subsp. thiosulfatophilum)).